A 145-amino-acid chain; its full sequence is Large ribosomal subunit protein uL15 (145 aa).

The tract at residues 1 to 50 (MLHTIKPVTNARKSTKRLGRGPGSGTGKTSGKGHKGQLARSGKTLRPGFE) is disordered. The segment covering 20-30 (RGPGSGTGKTS) has biased composition (gly residues).

It belongs to the universal ribosomal protein uL15 family. In terms of assembly, part of the 50S ribosomal subunit.

Binds to the 23S rRNA. The polypeptide is Large ribosomal subunit protein uL15 (Aster yellows witches'-broom phytoplasma (strain AYWB)).